The following is a 209-amino-acid chain: Large ribosomal subunit protein bL25 (209 aa).

Residues 185–209 (SKATTGEEEGAEAAGEGEEAEEKPE) are disordered. The span at 190–209 (GEEEGAEAAGEGEEAEEKPE) shows a compositional bias: acidic residues.

Belongs to the bacterial ribosomal protein bL25 family. CTC subfamily. As to quaternary structure, part of the 50S ribosomal subunit; part of the 5S rRNA/L5/L18/L25 subcomplex. Contacts the 5S rRNA. Binds to the 5S rRNA independently of L5 and L18.

This is one of the proteins that binds to the 5S RNA in the ribosome where it forms part of the central protuberance. The protein is Large ribosomal subunit protein bL25 of Syntrophomonas wolfei subsp. wolfei (strain DSM 2245B / Goettingen).